The chain runs to 391 residues: Carbamoyl phosphate synthase small chain (391 aa).

The tract at residues 1–189 (MIKSALLVLE…DLPAAKQPED (189 aa)) is CPSase. L-glutamine contacts are provided by Ser-47, Gly-241, and Gly-243. The Glutamine amidotransferase type-1 domain occupies 193–380 (HVVAYDYGVK…IELIEAYRAS (188 aa)). Residue Cys-269 is the Nucleophile of the active site. 5 residues coordinate L-glutamine: Leu-270, Gln-273, Asn-311, Gly-313, and Phe-314. Residues His-353 and Glu-355 contribute to the active site.

It belongs to the CarA family. In terms of assembly, composed of two chains; the small (or glutamine) chain promotes the hydrolysis of glutamine to ammonia, which is used by the large (or ammonia) chain to synthesize carbamoyl phosphate. Tetramer of heterodimers (alpha,beta)4.

It catalyses the reaction hydrogencarbonate + L-glutamine + 2 ATP + H2O = carbamoyl phosphate + L-glutamate + 2 ADP + phosphate + 2 H(+). The enzyme catalyses L-glutamine + H2O = L-glutamate + NH4(+). Its pathway is amino-acid biosynthesis; L-arginine biosynthesis; carbamoyl phosphate from bicarbonate: step 1/1. The protein operates within pyrimidine metabolism; UMP biosynthesis via de novo pathway; (S)-dihydroorotate from bicarbonate: step 1/3. Small subunit of the glutamine-dependent carbamoyl phosphate synthetase (CPSase). CPSase catalyzes the formation of carbamoyl phosphate from the ammonia moiety of glutamine, carbonate, and phosphate donated by ATP, constituting the first step of 2 biosynthetic pathways, one leading to arginine and/or urea and the other to pyrimidine nucleotides. The small subunit (glutamine amidotransferase) binds and cleaves glutamine to supply the large subunit with the substrate ammonia. The protein is Carbamoyl phosphate synthase small chain of Yersinia pestis.